The chain runs to 298 residues: GTPase Era (298 aa).

Residues 3-170 (KSGFVAILGR…IKLLTDNLEE (168 aa)) form the Era-type G domain. The tract at residues 11–18 (GRPNVGKS) is G1. 11–18 (GRPNVGKS) contacts GTP. Residues 37-41 (QTTRN) form a G2 region. Residues 58 to 61 (DTPG) form a G3 region. GTP is bound by residues 58–62 (DTPGI) and 120–123 (NKID). Residues 120–123 (NKID) are G4. The G5 stretch occupies residues 149–151 (ISA). The region spanning 201–279 (TQQEVPHSVA…YLETWVKVKK (79 aa)) is the KH type-2 domain.

It belongs to the TRAFAC class TrmE-Era-EngA-EngB-Septin-like GTPase superfamily. Era GTPase family. Monomer.

Its subcellular location is the cytoplasm. It localises to the cell membrane. An essential GTPase that binds both GDP and GTP, with rapid nucleotide exchange. Plays a role in 16S rRNA processing and 30S ribosomal subunit biogenesis and possibly also in cell cycle regulation and energy metabolism. The chain is GTPase Era from Streptococcus pyogenes serotype M3 (strain ATCC BAA-595 / MGAS315).